Consider the following 319-residue polypeptide: G-protein coupled receptor 171 (319 aa).

At 1 to 21 (MTNSSTFCPVYRDLEPFTYFF) the chain is on the extracellular side. N-linked (GlcNAc...) asparagine glycosylation is present at asparagine 3. The chain crosses the membrane as a helical span at residues 22 to 42 (YLVFLIGIIGSCFATWAFIQK). Over 43-48 (NTNHRC) the chain is Cytoplasmic. Residues 49 to 69 (VSIYLINLLTADFLLTLALPV) form a helical membrane-spanning segment. The Extracellular segment spans residues 70 to 89 (KITVDLGVAPWKLRIFHCQV). The helical transmembrane segment at 90–110 (TACLIYINMYLSIIFLAFVSI) threads the bilayer. At 111–132 (DRCLQLTYSCKIYRIQEPGFAK) the chain is on the cytoplasmic side. The helical transmembrane segment at 133 to 153 (MISAVVWLMVLLIMVPNMIIP) threads the bilayer. The Extracellular portion of the chain corresponds to 154-181 (IKDIKEKPNVGCMEFKSEFGRNWHLLTN). Residues 182 to 202 (FISIAIFFNFSAIILISNCLV) form a helical membrane-spanning segment. Residues 203-224 (IRQLYRNKDNENYPNVKRALIS) lie on the Cytoplasmic side of the membrane. Residues 225–245 (ILLVTTGYIICFVPYHIVRIP) traverse the membrane as a helical segment. Residues 246 to 268 (YTLSQTEVISDCSTRISLFKAKE) lie on the Extracellular side of the membrane. A helical membrane pass occupies residues 269–289 (ATLLLAVSNLCFDPILYYHLS). The Cytoplasmic portion of the chain corresponds to 290-319 (KAFRLKITETFASHKESKAQKEKPRSENNA).

Belongs to the G-protein coupled receptor 1 family.

It is found in the cell membrane. G-protein coupled receptor for Big LEN, a 16-amino acid neuropeptide produced from the precursor protein, proSAAS (encoded by PCSK1N). Acts through a G(i)-alpha-mediated pathway in response to bigLEN. Big LEN-GPR171 system plays an important role in regulating feeding and metabolism. Also plays a role in modulating fear and anxiety-like behaviors in the basolateral amygdala. Big LEN-GPR171 modulates the mu-type opioid receptor signaling and antinociception. Acts as a negative regulator T cell function. This Bos taurus (Bovine) protein is G-protein coupled receptor 171 (GPR171).